A 190-amino-acid chain; its full sequence is MDRKEQKAIIEGLLFVAGDEGIYPEQIAKVLEVEVEEVLNSIEEMQKECEGSNRGLQIVQYAKVYRFATKKEHASYYQKLIDTPTAASLSQAALETLAIVAYRQPITRTEMEEIRGVKTDKALQTLVSHLLIKETGRAEGPGRPILYGTTKEFLDTFGLKTLDDLPPLSEENEQMNEADLFFGSLQELSK.

It belongs to the ScpB family. In terms of assembly, homodimer. Homodimerization may be required to stabilize the binding of ScpA to the Smc head domains. Component of a cohesin-like complex composed of ScpA, ScpB and the Smc homodimer, in which ScpA and ScpB bind to the head domain of Smc. The presence of the three proteins is required for the association of the complex with DNA.

The protein resides in the cytoplasm. In terms of biological role, participates in chromosomal partition during cell division. May act via the formation of a condensin-like complex containing Smc and ScpA that pull DNA away from mid-cell into both cell halves. The protein is Segregation and condensation protein B of Bacillus mycoides (strain KBAB4) (Bacillus weihenstephanensis).